We begin with the raw amino-acid sequence, 110 residues long: Large ribosomal subunit protein uL22 (110 aa).

The protein belongs to the universal ribosomal protein uL22 family. In terms of assembly, part of the 50S ribosomal subunit.

Its function is as follows. This protein binds specifically to 23S rRNA; its binding is stimulated by other ribosomal proteins, e.g. L4, L17, and L20. It is important during the early stages of 50S assembly. It makes multiple contacts with different domains of the 23S rRNA in the assembled 50S subunit and ribosome. The globular domain of the protein is located near the polypeptide exit tunnel on the outside of the subunit, while an extended beta-hairpin is found that lines the wall of the exit tunnel in the center of the 70S ribosome. The sequence is that of Large ribosomal subunit protein uL22 from Exiguobacterium sibiricum (strain DSM 17290 / CCUG 55495 / CIP 109462 / JCM 13490 / 255-15).